The primary structure comprises 445 residues: Trigger factor (445 aa).

A PPIase FKBP-type domain is found at 162–247 (GDQVTIDAIG…IKAVHTAEPT (86 aa)).

It belongs to the FKBP-type PPIase family. Tig subfamily.

The protein resides in the cytoplasm. It catalyses the reaction [protein]-peptidylproline (omega=180) = [protein]-peptidylproline (omega=0). Its function is as follows. Involved in protein export. Acts as a chaperone by maintaining the newly synthesized protein in an open conformation. Functions as a peptidyl-prolyl cis-trans isomerase. This is Trigger factor from Rickettsia rickettsii (strain Sheila Smith).